Here is a 151-residue protein sequence, read N- to C-terminus: MATLEFRLAEMLKVPVEALGFQLWGIEYVQAGKHSTLRVFIDGENGINIEDCANASRQVSAVLDVEDPISTEYTLEVSSPGVDRPLFTAEQYAGYVGEDVKLQLTMPVDGSRNLKGAITAVDGQMLSLKVNGKELVVALDNIRKGNLIAKF.

Belongs to the RimP family.

It localises to the cytoplasm. Required for maturation of 30S ribosomal subunits. The chain is Ribosome maturation factor RimP from Shewanella baltica (strain OS223).